A 211-amino-acid polypeptide reads, in one-letter code: Urease accessory protein UreG (211 aa).

11–18 (GPVGSGKT) is a binding site for GTP.

Belongs to the SIMIBI class G3E GTPase family. UreG subfamily. In terms of assembly, homodimer. UreD, UreF and UreG form a complex that acts as a GTP-hydrolysis-dependent molecular chaperone, activating the urease apoprotein by helping to assemble the nickel containing metallocenter of UreC. The UreE protein probably delivers the nickel.

Its subcellular location is the cytoplasm. Its function is as follows. Facilitates the functional incorporation of the urease nickel metallocenter. This process requires GTP hydrolysis, probably effectuated by UreG. This Laribacter hongkongensis (strain HLHK9) protein is Urease accessory protein UreG.